The following is a 243-amino-acid chain: Small ribosomal subunit protein uS3 (243 aa).

Residues 39 to 110 enclose the KH type-2 domain; that stretch reads IRTFIQKKYS…QVRINVVEVE (72 aa). Positions 221 to 243 are disordered; that stretch reads GAIPRRKGSRKPQQFEDRSNENS. The segment covering 233 to 243 has biased composition (basic and acidic residues); that stretch reads QQFEDRSNENS.

Belongs to the universal ribosomal protein uS3 family. As to quaternary structure, part of the 30S ribosomal subunit. Forms a tight complex with proteins S10 and S14.

Its function is as follows. Binds the lower part of the 30S subunit head. Binds mRNA in the 70S ribosome, positioning it for translation. The polypeptide is Small ribosomal subunit protein uS3 (Prochlorococcus marinus subsp. pastoris (strain CCMP1986 / NIES-2087 / MED4)).